The primary structure comprises 253 residues: Bridging integrator 3 (253 aa).

Positions 9–232 constitute a BAR domain; that stretch reads GQPKKQIVSK…LDQPGHSDEQ (224 aa). Coiled coils occupy residues 16-57 and 120-151; these read VSKT…AMSK and SLNM…KEKT. A disordered region spans residues 222-241; it reads QLDQPGHSDEQRERENETKL. Basic and acidic residues predominate over residues 227 to 241; the sequence is GHSDEQRERENETKL.

Its subcellular location is the cytoplasm. The protein resides in the cytoskeleton. In terms of biological role, involved in cytokinesis and septation where it has a role in the localization of F-actin. The chain is Bridging integrator 3 (Bin3) from Mus musculus (Mouse).